The chain runs to 339 residues: Flap endonuclease 1 (339 aa).

An N-domain region spans residues 1–99; that stretch reads MGVNLKEIVD…VAWEKRKKHK (99 aa). D29, D81, E153, E155, D174, D176, and D237 together coordinate Mg(2+). The segment at 117–258 is I-domain; it reads EAIKYAKSLG…TAIEIVKRFG (142 aa). The segment at 329-337 is interaction with PCNA; it reads NQKTLFSFF.

The protein belongs to the XPG/RAD2 endonuclease family. FEN1 subfamily. Interacts with PCNA. PCNA stimulates the nuclease activity without altering cleavage specificity. The cofactor is Mg(2+).

Functionally, structure-specific nuclease with 5'-flap endonuclease and 5'-3' exonuclease activities involved in DNA replication and repair. During DNA replication, cleaves the 5'-overhanging flap structure that is generated by displacement synthesis when DNA polymerase encounters the 5'-end of a downstream Okazaki fragment. Binds the unpaired 3'-DNA end and kinks the DNA to facilitate 5' cleavage specificity. Cleaves one nucleotide into the double-stranded DNA from the junction in flap DNA, leaving a nick for ligation. Also involved in the base excision repair (BER) pathway. Acts as a genome stabilization factor that prevents flaps from equilibrating into structures that lead to duplications and deletions. Also possesses 5'-3' exonuclease activity on nicked or gapped double-stranded DNA. This is Flap endonuclease 1 from Nanoarchaeum equitans (strain Kin4-M).